Consider the following 475-residue polypeptide: Ankyrin repeat, SAM and basic leucine zipper domain-containing protein 1 (475 aa).

The span at 1 to 10 (MAAGALRGLA) shows a compositional bias: low complexity. A disordered region spans residues 1 to 23 (MAAGALRGLAVAGGGESSESEDD). Phosphoserine is present on residues Ser17, Ser18, and Ser20. ANK repeat units lie at residues 45 to 74 (EKNE…SVDS), 78 to 107 (YGWT…NASF), 110 to 144 (DKQT…DPNV), 148 to 177 (RLMT…EVNT), 181 to 210 (NGYT…NKML), and 214 to 243 (DGKI…PLEG). Positions 272 to 334 (SYTAFGDLEI…KILSALKELE (63 aa)) constitute an SAM domain.

As to quaternary structure, interacts with DDX4, PIWIL1, RANBP9 and TDRD1.

It localises to the cytoplasm. Functionally, plays a central role during spermatogenesis by repressing transposable elements and preventing their mobilization, which is essential for the germline integrity. Acts via the piRNA metabolic process, which mediates the repression of transposable elements during meiosis by forming complexes composed of piRNAs and Piwi proteins and governs the methylation and subsequent repression of transposons. Its association with pi-bodies suggests a participation in the primary piRNAs metabolic process. Required prior to the pachytene stage to facilitate the production of multiple types of piRNAs, including those associated with repeats involved in the regulation of retrotransposons. May act by mediating protein-protein interactions during germ cell maturation. This is Ankyrin repeat, SAM and basic leucine zipper domain-containing protein 1 (ASZ1) from Otolemur garnettii (Small-eared galago).